A 241-amino-acid polypeptide reads, in one-letter code: Accessory protein p30II (241 aa).

Short sequence motifs (nuclear localization signal) lie at residues 73 to 78 (RRCRSR) and 91 to 98 (GPRRSRPR). The tract at residues 86–153 (AFPPGGPRRS…HRNSPTDTKL (68 aa)) is disordered. Low complexity predominate over residues 107–138 (PSSTVSSSSLSFNSSSKDNSPSTNSSTSRSSG). Positions 175 to 184 (LRVWRLCTRR) match the Mitochondrial targeting signal motif.

This sequence belongs to the HTLV-1 accessory protein p30II family. P30II binds to the KIX domains of CREBBP and EP300.

It localises to the host nucleus. Its subcellular location is the host nucleolus. The protein localises to the host mitochondrion inner membrane. Functionally, p30II is a multifunctional regulator that sequesters EP300/CREBBP and down-regulates CREB-responsive element (CRE) and Tax-responsive element (TRE) mediated transcription. Specifically binds and represses tax/rex mRNA nuclear export. Since Tax and Rex are positive regulators of viral gene expression, their inhibition by p30II reduces virion production, and allows the virus to escape the host immune surveillance and persist latently in an immune-competent host. P13II increases mitochondrial permeability to monovalent cations, producing a rapid, membrane potential-dependent influx of potassium. This could involve a channel-forming activity. Interferes with cell proliferation and transformation and promotes apoptosis induced by ceramide and Fas ligand, probably using the Ras signaling. This is Accessory protein p30II from Human T-cell leukemia virus 1 (isolate Caribbea HS-35 subtype A) (HTLV-1).